We begin with the raw amino-acid sequence, 317 residues long: MHISVLLEEAVDALNIQKGGIYVDGTYGRGGHSRLILSRLDKSGQLIAFDKDPAAISEARSILDERFQAVHSSYAGMYTALQSLGINRVDGILLDLGVSSIQLDEASRGFSFRHDGPLDMRMDSSRGKTAAEWLTMASETELKEIIRTYGEERYAGQIASAIVMEQARQPISTTLRLAEIVAAVVRKRGHRDDRQHPATRTFQAIRIHLNQELEELSMTLPQCVELLNTGGRLVVISFHSLEDRIVKRFMRMQTGTDTLPRRLPIREEESRLHNQQKLRIIGKKIRPGSDEVSANPRARSAVMRVAEKLETRNAISR.

Residues 30–32, Asp-50, Tyr-78, Asp-95, and Gln-102 each bind S-adenosyl-L-methionine; that span reads GGH.

It belongs to the methyltransferase superfamily. RsmH family.

Its subcellular location is the cytoplasm. The catalysed reaction is cytidine(1402) in 16S rRNA + S-adenosyl-L-methionine = N(4)-methylcytidine(1402) in 16S rRNA + S-adenosyl-L-homocysteine + H(+). Its function is as follows. Specifically methylates the N4 position of cytidine in position 1402 (C1402) of 16S rRNA. In Nitrosomonas eutropha (strain DSM 101675 / C91 / Nm57), this protein is Ribosomal RNA small subunit methyltransferase H.